Reading from the N-terminus, the 688-residue chain is Translation initiation factor IF-2 (688 aa).

Residues 54 to 95 (KEKSEKTKEEDDEIETTAKNPIKESTNNKKPNKRDDKNEKVN) are disordered. Basic and acidic residues predominate over residues 86–95 (KRDDKNEKVN). Residues 187-354 (KRSPIITVMG…MILLSSEILE (168 aa)) form the tr-type G domain. Positions 196-203 (GHVDHGKT) are G1. 196–203 (GHVDHGKT) contacts GTP. The tract at residues 221–225 (GITQH) is G2. Residues 242–245 (DTPG) are G3. GTP contacts are provided by residues 242-246 (DTPGH) and 296-299 (NKID). Positions 296–299 (NKID) are G4. The tract at residues 332-334 (SAH) is G5.

The protein belongs to the TRAFAC class translation factor GTPase superfamily. Classic translation factor GTPase family. IF-2 subfamily.

Its subcellular location is the cytoplasm. One of the essential components for the initiation of protein synthesis. Protects formylmethionyl-tRNA from spontaneous hydrolysis and promotes its binding to the 30S ribosomal subunits. Also involved in the hydrolysis of GTP during the formation of the 70S ribosomal complex. The polypeptide is Translation initiation factor IF-2 (Clostridium botulinum (strain Okra / Type B1)).